We begin with the raw amino-acid sequence, 577 residues long: Hemagglutinin-neuraminidase (577 aa).

The residue at position 1 (Met1) is a Blocked amino end (Met); by host. Over 1–26 (MDRAVSQVALENDEREAKNTWRLIFR) the chain is Intravirion. A helical membrane pass occupies residues 27–48 (IAILLLTVVTLATSVASLVYSM). Residues 49 to 577 (GASTPSDLVG…NDGVREARSG (529 aa)) are Virion surface-facing. An N-linked (GlcNAc...) asparagine; by host glycan is attached at Asn119. The interval 124–152 (GAPIHDPDFIGGIGKELIVDDASDVTSFY) is important for interaction with fusion/F protein. Intrachain disulfides connect Cys172-Cys196, Cys186-Cys247, and Cys238-Cys251. Positions 234–239 (NRKSCS) are involved in neuraminidase activity. Residues Asn341 and Asn433 are each glycosylated (N-linked (GlcNAc...) asparagine; by host). 2 disulfides stabilise this stretch: Cys344-Cys461 and Cys455-Cys465. N-linked (GlcNAc...) asparagine; by host glycosylation is found at Asn481 and Asn538. Cys531 and Cys542 form a disulfide bridge.

The protein belongs to the paramyxoviruses hemagglutinin-neuraminidase family. Homotetramer; composed of disulfide-linked homodimers. Interacts with F protein trimer. Interacts with host CG-1B; this interaction inhibits viral adsorption and replication rather than internalization.

It localises to the virion membrane. Its subcellular location is the host cell membrane. The catalysed reaction is Hydrolysis of alpha-(2-&gt;3)-, alpha-(2-&gt;6)-, alpha-(2-&gt;8)- glycosidic linkages of terminal sialic acid residues in oligosaccharides, glycoproteins, glycolipids, colominic acid and synthetic substrates.. Its function is as follows. Mediates the viral entry into the host cell together with fusion/F protein. Attaches the virus to sialic acid-containing cell receptors and thereby initiates infection. Binding of HN protein to the receptor induces a conformational change that allows the F protein to trigger virion/cell membranes fusion. Functionally, neuraminidase activity ensures the efficient spread of the virus by dissociating the mature virions from the neuraminic acid containing glycoproteins. The protein is Hemagglutinin-neuraminidase (HN) of Gallus gallus (Chicken).